The primary structure comprises 124 residues: UPF0231 protein Shewmr7_3366 (124 aa).

This sequence belongs to the UPF0231 family.

The chain is UPF0231 protein Shewmr7_3366 from Shewanella sp. (strain MR-7).